Reading from the N-terminus, the 99-residue chain is Sperm protein associated with the nucleus on the X chromosome N4 (99 aa).

Over residues methionine 1–glutamate 10 the composition is skewed to polar residues. The segment at methionine 1–asparagine 99 is disordered. The span at asparagine 11–arginine 22 shows a compositional bias: basic and acidic residues. Residues lysine 23–histidine 32 are compositionally biased toward basic residues. Polar residues predominate over residues serine 64–aspartate 78.

It belongs to the SPAN-X family.

In Homo sapiens (Human), this protein is Sperm protein associated with the nucleus on the X chromosome N4 (SPANXN4).